The sequence spans 273 residues: Large ribosomal subunit protein uL2cy (273 aa).

Disordered stretches follow at residues 1–22 and 224–273; these read MAIH…DSQV and NPVD…RRRK.

Belongs to the universal ribosomal protein uL2 family. As to quaternary structure, part of the 50S ribosomal subunit.

It is found in the plastid. Its subcellular location is the chloroplast. The protein is Large ribosomal subunit protein uL2cy (rpl2-B) of Chloranthus spicatus (Chulantree).